The following is a 544-amino-acid chain: CTP synthase (544 aa).

The tract at residues 1 to 265 (MTKFIFVTGG…DDIICEHLDL (265 aa)) is amidoligase domain. Ser13 contacts CTP. Ser13 contacts UTP. Residues 14–19 (SLGKGI) and Asp71 contribute to the ATP site. 2 residues coordinate Mg(2+): Asp71 and Glu139. CTP-binding positions include 146–148 (DIE), 186–191 (KTKPTQ), and Lys222. UTP is bound by residues 186–191 (KTKPTQ) and Lys222. Residues 290–542 (NIAMVGKYVD…VEAALAYQAD (253 aa)) enclose the Glutamine amidotransferase type-1 domain. Residue Gly351 participates in L-glutamine binding. The Nucleophile; for glutamine hydrolysis role is filled by Cys378. L-glutamine is bound by residues 379–382 (LGMQ), Glu402, and Arg469. Active-site residues include His515 and Glu517.

The protein belongs to the CTP synthase family. In terms of assembly, homotetramer.

The enzyme catalyses UTP + L-glutamine + ATP + H2O = CTP + L-glutamate + ADP + phosphate + 2 H(+). It carries out the reaction L-glutamine + H2O = L-glutamate + NH4(+). It catalyses the reaction UTP + NH4(+) + ATP = CTP + ADP + phosphate + 2 H(+). The protein operates within pyrimidine metabolism; CTP biosynthesis via de novo pathway; CTP from UDP: step 2/2. Its activity is regulated as follows. Allosterically activated by GTP, when glutamine is the substrate; GTP has no effect on the reaction when ammonia is the substrate. The allosteric effector GTP functions by stabilizing the protein conformation that binds the tetrahedral intermediate(s) formed during glutamine hydrolysis. Inhibited by the product CTP, via allosteric rather than competitive inhibition. Its function is as follows. Catalyzes the ATP-dependent amination of UTP to CTP with either L-glutamine or ammonia as the source of nitrogen. Regulates intracellular CTP levels through interactions with the four ribonucleotide triphosphates. This is CTP synthase from Laribacter hongkongensis (strain HLHK9).